A 265-amino-acid chain; its full sequence is Cytosolic Fe-S cluster assembly factor NUBP2 homolog (265 aa).

22-29 (GKGGVGKS) provides a ligand contact to ATP. C196 and C199 together coordinate [4Fe-4S] cluster.

Belongs to the Mrp/NBP35 ATP-binding proteins family. NUBP2/CFD1 subfamily. As to quaternary structure, heterotetramer of 2 NUBP1 and 2 NUBP2 chains. [4Fe-4S] cluster serves as cofactor.

The protein localises to the cytoplasm. Component of the cytosolic iron-sulfur (Fe/S) protein assembly (CIA) machinery. Required for maturation of extramitochondrial Fe-S proteins. The NUBP1-NUBP2 heterotetramer forms a Fe-S scaffold complex, mediating the de novo assembly of an Fe-S cluster and its transfer to target apoproteins. This Trichoplax adhaerens (Trichoplax reptans) protein is Cytosolic Fe-S cluster assembly factor NUBP2 homolog.